Here is a 357-residue protein sequence, read N- to C-terminus: Phosphoribosylformylglycinamidine cyclo-ligase (357 aa).

This sequence belongs to the AIR synthase family.

The protein resides in the cytoplasm. The catalysed reaction is 2-formamido-N(1)-(5-O-phospho-beta-D-ribosyl)acetamidine + ATP = 5-amino-1-(5-phospho-beta-D-ribosyl)imidazole + ADP + phosphate + H(+). It functions in the pathway purine metabolism; IMP biosynthesis via de novo pathway; 5-amino-1-(5-phospho-D-ribosyl)imidazole from N(2)-formyl-N(1)-(5-phospho-D-ribosyl)glycinamide: step 2/2. In Rhizobium leguminosarum, this protein is Phosphoribosylformylglycinamidine cyclo-ligase.